The primary structure comprises 1136 residues: Rho GTPase-activating protein 45 (1136 aa).

2 disordered regions span residues 1-73 (MFSR…RHAS) and 91-110 (HRSPLTAASPGELPTEGAGP). Phosphoserine is present on residues serine 23, serine 25, serine 73, serine 93, and serine 99. Positions 269-539 (EEVDVLLQRC…SSKLYDPGQQ (271 aa)) constitute an F-BAR domain. Coiled-coil stretches lie at residues 376 to 412 (EHEKRRKEIKEAWHRAQRKLQEAESNLRKAKQGYVQR) and 440 to 499 (TATK…RQSD). Phosphoserine is present on residues serine 569, serine 578, serine 592, and serine 619. Residues 583-662 (DVARPEAAGS…SSTEELVDPD (80 aa)) are disordered. Residues 646 to 655 (TSSSGTMSST) show a composition bias toward low complexity. The Phorbol-ester/DAG-type zinc-finger motif lies at 702 to 747 (THRLRKLRTPAKCRECNSYVYFQGAECEECCLACHKKCLETLAIQC). The Rho-GAP domain maps to 761 to 974 (QDFSHAARSA…TLIVHYGLVF (214 aa)). 4 positions are modified to phosphoserine: serine 949, serine 1027, serine 1030, and serine 1032. Positions 1061 to 1136 (EASLEVASGS…SCRERQPEFV (76 aa)) are disordered. Polar residues predominate over residues 1095–1109 (QQLSGFNTNQSNNVL).

As to quaternary structure, HA-1 forms a complex with MHC class I HLA-A*0201. Expressed on cells of the hematopoietic lineage. Detected in dendritic cells and epidermal Langerhans cells. Expressed in peripheral blood mononuclear cells, in all leukemia/lymphoma cell lines. Detected also in some solid tumors and tissues such as cancerous and non-cancerous tissue.

It localises to the cytoplasm. It is found in the cell projection. The protein localises to the ruffle membrane. Functionally, contains a GTPase activator for the Rho-type GTPases (RhoGAP) domain that would be able to negatively regulate the actin cytoskeleton as well as cell spreading. However, also contains N-terminally a BAR-domin which is able to play an autoinhibitory effect on this RhoGAP activity. Its function is as follows. Precursor of the histocompatibility antigen HA-1. More generally, minor histocompatibility antigens (mHags) refer to immunogenic peptide which, when complexed with MHC, can generate an immune response after recognition by specific T-cells. The peptides are derived from polymorphic intracellular proteins, which are cleaved by normal pathways of antigen processing. The binding of these peptides to MHC class I or class II molecules and its expression on the cell surface can stimulate T-cell responses and thereby trigger graft rejection or graft-versus-host disease (GVHD) after hematopoietic stem cell transplantation from HLA-identical sibling donor. GVHD is a frequent complication after bone marrow transplantation (BMT), due to mismatch of minor histocompatibility antigen in HLA-matched sibling marrow transplants. Specifically, mismatching for mHag HA-1 which is recognized as immunodominant, is shown to be associated with the development of severe GVHD after HLA-identical BMT. HA-1 is presented to the cell surface by MHC class I HLA-A*0201, but also by other HLA-A alleles. This complex specifically elicits donor-cytotoxic T-lymphocyte (CTL) reactivity against hematologic malignancies after treatment by HLA-identical allogenic BMT. It induces cell recognition and lysis by CTL. This Homo sapiens (Human) protein is Rho GTPase-activating protein 45.